Here is a 316-residue protein sequence, read N- to C-terminus: Very long chain fatty acid elongase 6 (316 aa).

Asn11 is a glycosylation site (N-linked (GlcNAc...) asparagine). The next 6 membrane-spanning stretches (helical) occupy residues 30 to 50 (WMLE…LVIF), 64 to 84 (LRGP…MGAA), 117 to 137 (FWTW…IFIV), 142 to 162 (PLIF…WFSY), 167 to 189 (SSAR…YYAL), and 202 to 222 (MIIT…NVWA). N-linked (GlcNAc...) asparagine glycosylation occurs at Asn242. The chain crosses the membrane as a helical span at residues 245–265 (IAMYSSYFVLFARFFYKAYLA).

It belongs to the ELO family. ELOVL6 subfamily. Detected in the CNS (central nervous system) of third larval instar (at protein level). Expressed in cyst progenitor cells (at protein level). In the adult fly, expressed in several tissues including, sperm, follicular epithelium, nurse cells and cyst cells.

The protein localises to the mitochondrion outer membrane. Its subcellular location is the endoplasmic reticulum membrane. The enzyme catalyses a very-long-chain acyl-CoA + malonyl-CoA + H(+) = a very-long-chain 3-oxoacyl-CoA + CO2 + CoA. It carries out the reaction hexadecanoyl-CoA + malonyl-CoA + H(+) = 3-oxooctadecanoyl-CoA + CO2 + CoA. The protein operates within lipid metabolism; fatty acid biosynthesis. Its function is as follows. Catalyzes the first and rate-limiting reaction of the four reactions that constitute the long-chain fatty acids elongation cycle. This process allows the addition of 2 carbons to the chain of long- and very long-chain fatty acids (VLCFAs) per cycle. Condensing enzyme that elongates fatty acids with 12, 14 and 16 carbons with higher activity toward C16:0 acyl-CoAs. Catalyzes the synthesis of unsaturated C16 long chain fatty acids and, to a lesser extent, C18:0 and those with low desaturation degree. May participate in the production of saturated and monounsaturated VLCFAs of different chain lengths that are involved in multiple biological processes as precursors of membrane lipids and lipid mediators. The chain is Very long chain fatty acid elongase 6 from Drosophila melanogaster (Fruit fly).